The following is a 354-amino-acid chain: tRNA N6-adenosine threonylcarbamoyltransferase (354 aa).

Residues H111 and H115 each coordinate Fe cation. Residues 134 to 138 (LVSGG), D167, G180, and N279 contribute to the substrate site. Position 319 (D319) interacts with Fe cation.

This sequence belongs to the KAE1 / TsaD family. Fe(2+) is required as a cofactor.

Its subcellular location is the cytoplasm. The enzyme catalyses L-threonylcarbamoyladenylate + adenosine(37) in tRNA = N(6)-L-threonylcarbamoyladenosine(37) in tRNA + AMP + H(+). Functionally, required for the formation of a threonylcarbamoyl group on adenosine at position 37 (t(6)A37) in tRNAs that read codons beginning with adenine. Is involved in the transfer of the threonylcarbamoyl moiety of threonylcarbamoyl-AMP (TC-AMP) to the N6 group of A37, together with TsaE and TsaB. TsaD likely plays a direct catalytic role in this reaction. This is tRNA N6-adenosine threonylcarbamoyltransferase from Neisseria meningitidis serogroup C / serotype 2a (strain ATCC 700532 / DSM 15464 / FAM18).